A 338-amino-acid chain; its full sequence is Probable tRNA pseudouridine synthase B (338 aa).

The Nucleophile role is filled by D78. A PUA domain is found at 245–320 (LPKIILRDSA…LAATSVRIMM (76 aa)).

The protein belongs to the pseudouridine synthase TruB family. Type 2 subfamily.

The catalysed reaction is uridine(55) in tRNA = pseudouridine(55) in tRNA. In terms of biological role, could be responsible for synthesis of pseudouridine from uracil-55 in the psi GC loop of transfer RNAs. The protein is Probable tRNA pseudouridine synthase B of Methanosarcina barkeri (strain Fusaro / DSM 804).